Here is a 485-residue protein sequence, read N- to C-terminus: UDP-N-acetylmuramate--L-alanine ligase (485 aa).

Position 120–126 (120–126 (GSHGKTT)) interacts with ATP.

Belongs to the MurCDEF family.

The protein resides in the cytoplasm. It carries out the reaction UDP-N-acetyl-alpha-D-muramate + L-alanine + ATP = UDP-N-acetyl-alpha-D-muramoyl-L-alanine + ADP + phosphate + H(+). The protein operates within cell wall biogenesis; peptidoglycan biosynthesis. Cell wall formation. The chain is UDP-N-acetylmuramate--L-alanine ligase from Rickettsia rickettsii (strain Iowa).